The chain runs to 203 residues: ADP-ribosylation factor-like protein 6-interacting protein 1 (203 aa).

Residues 1–41 lie on the Cytoplasmic side of the membrane; it reads MAEGDNRSSNLLAAETASLEEQLQGWGEVMLMADKVLRWER. Residues 42–62 traverse the membrane as a helical segment; the sequence is AWFPPAIMGVVSLVFLIIYYL. Over 63 to 65 the chain is Lumenal; the sequence is DPS. A helical membrane pass occupies residues 66 to 86; that stretch reads VLSGVSCFVMFLCLADYLVPI. Residues 87-133 lie on the Cytoplasmic side of the membrane; the sequence is LAPRIFGSNKWTTEQQQRFHEICSNLVKTRRRAVGWWKRLFTLKEEK. The helical transmembrane segment at 134 to 175 threads the bilayer; it reads PKMYFMTMIVSLAAVAWVGQQVHNLLLTYLIVTSLLLLPGLN. Over 176 to 203 the chain is Lumenal; the sequence is QHGIISKYIGMAKREINKLLKQKEKKNE.

It belongs to the ARL6ip family. In terms of assembly, homooligomer. Heterodimer with ARL6IP5. Interacts with ATL1, TMEM33 and ARL6.

The protein resides in the endomembrane system. The protein localises to the endoplasmic reticulum membrane. Its subcellular location is the endoplasmic reticulum. Functionally, positively regulates SLC1A1/EAAC1-mediated glutamate transport by increasing its affinity for glutamate in a PKC activity-dependent manner. Promotes the catalytic efficiency of SLC1A1/EAAC1 probably by reducing its interaction with ARL6IP5, a negative regulator of SLC1A1/EAAC1-mediated glutamate transport. Plays a role in the formation and stabilization of endoplasmic reticulum tubules. Negatively regulates apoptosis, possibly by modulating the activity of caspase-9 (CASP9). Inhibits cleavage of CASP9-dependent substrates and downstream markers of apoptosis but not CASP9 itself. May be involved in protein transport, membrane trafficking, or cell signaling during hematopoietic maturation. The chain is ADP-ribosylation factor-like protein 6-interacting protein 1 (ARL6IP1) from Pongo abelii (Sumatran orangutan).